The chain runs to 190 residues: 6,7-dimethyl-8-ribityllumazine synthase (190 aa).

5-amino-6-(D-ribitylamino)uracil contacts are provided by residues Phe-23, 61–63, and 85–87; these read SFE and AVI. Position 90–91 (90–91) interacts with (2S)-2-hydroxy-3-oxobutyl phosphate; that stretch reads QT. Residue His-93 is the Proton donor of the active site. Phe-118 contributes to the 5-amino-6-(D-ribitylamino)uracil binding site. Arg-132 serves as a coordination point for (2S)-2-hydroxy-3-oxobutyl phosphate.

Belongs to the DMRL synthase family.

It carries out the reaction (2S)-2-hydroxy-3-oxobutyl phosphate + 5-amino-6-(D-ribitylamino)uracil = 6,7-dimethyl-8-(1-D-ribityl)lumazine + phosphate + 2 H2O + H(+). The protein operates within cofactor biosynthesis; riboflavin biosynthesis; riboflavin from 2-hydroxy-3-oxobutyl phosphate and 5-amino-6-(D-ribitylamino)uracil: step 1/2. Its function is as follows. Catalyzes the formation of 6,7-dimethyl-8-ribityllumazine by condensation of 5-amino-6-(D-ribitylamino)uracil with 3,4-dihydroxy-2-butanone 4-phosphate. This is the penultimate step in the biosynthesis of riboflavin. This Nostoc sp. (strain PCC 7120 / SAG 25.82 / UTEX 2576) protein is 6,7-dimethyl-8-ribityllumazine synthase.